The chain runs to 319 residues: Acetyl esterase (319 aa).

Residues 91-93 (HGG) carry the Involved in the stabilization of the negatively charged intermediate by the formation of the oxyanion hole motif. Active-site residues include S165, D262, and H292.

This sequence belongs to the 'GDXG' lipolytic enzyme family. Homodimer. Interacts with MalT and MelA.

It is found in the cytoplasm. Displays esterase activity towards short chain fatty esters (acyl chain length of up to 8 carbons). Able to hydrolyze triacetylglycerol (triacetin) and tributyrylglycerol (tributyrin), but not trioleylglycerol (triolein) or cholesterol oleate. Negatively regulates MalT activity by antagonizing maltotriose binding. Inhibits MelA galactosidase activity. This chain is Acetyl esterase, found in Escherichia coli O81 (strain ED1a).